The sequence spans 418 residues: Transcription termination factor Rho (418 aa).

A Rho RNA-BD domain is found at 48-123 (SIFGEGTLEV…VKVDKVNGEA (76 aa)). ATP-binding positions include 169 to 174 (GKGQRA), 181 to 186 (KSGKTV), and arginine 212.

The protein belongs to the Rho family. In terms of assembly, homohexamer. The homohexamer assembles into an open ring structure.

Its function is as follows. Facilitates transcription termination by a mechanism that involves Rho binding to the nascent RNA, activation of Rho's RNA-dependent ATPase activity, and release of the mRNA from the DNA template. The sequence is that of Transcription termination factor Rho from Chromobacterium violaceum (strain ATCC 12472 / DSM 30191 / JCM 1249 / CCUG 213 / NBRC 12614 / NCIMB 9131 / NCTC 9757 / MK).